The following is a 225-amino-acid chain: Ribonuclease T (225 aa).

A disordered region spans residues 1–21 (MSEDHFDEEHEGHGGGGGSRH). The Exonuclease domain occupies 33–207 (VVVDVETGGF…YDTEKTAELF (175 aa)). Mg(2+) contacts are provided by Asp36, Glu38, His194, and Asp199. His194 serves as the catalytic Proton donor/acceptor.

This sequence belongs to the RNase T family. In terms of assembly, homodimer. Requires Mg(2+) as cofactor.

In terms of biological role, trims short 3' overhangs of a variety of RNA species, leaving a one or two nucleotide 3' overhang. Responsible for the end-turnover of tRNA: specifically removes the terminal AMP residue from uncharged tRNA (tRNA-C-C-A). Also appears to be involved in tRNA biosynthesis. This chain is Ribonuclease T, found in Pseudomonas syringae pv. tomato (strain ATCC BAA-871 / DC3000).